Consider the following 616-residue polypeptide: Fatty acyl-CoA reductase 2, chloroplastic (616 aa).

Residues 1–14 (MEALFLSSSSSSIV) constitute a chloroplast transit peptide. The NAD(P)H-binding signature appears at 133–143 (FLITGSTGFLA). Active-site residues include Tyr-357 and Lys-361.

Belongs to the fatty acyl-CoA reductase family. Expressed in the tapetum of anthers.

The protein resides in the plastid. Its subcellular location is the chloroplast. The enzyme catalyses a long-chain fatty acyl-CoA + 2 NADPH + 2 H(+) = a long-chain primary fatty alcohol + 2 NADP(+) + CoA. It catalyses the reaction hexadecanoyl-CoA + 2 NADPH + 2 H(+) = hexadecan-1-ol + 2 NADP(+) + CoA. The catalysed reaction is hexadecanoyl-[ACP] + 2 NADPH + 2 H(+) = hexadecan-1-ol + holo-[ACP] + 2 NADP(+). Functionally, catalyzes the reduction of fatty acyl-CoA and -ACP (acyl carrier protein) substrates to fatty alcohols. Triggers the accumulation of C16 and C18 fatty alcohols; converts palmitoyl-acyl carrier protein to the corresponding C16:0 alcohol with NAD(P)H as electron donor, but seems inactive toward palmitoyl- or other acyl-coenzyme A. Also triggers the formation of some C16:0 aldehydes. Involved in the synthesis of the lipid component in sporopollenin. Required for exine patterning of pollen grain by mediating the formation of pollen wall substances. The polypeptide is Fatty acyl-CoA reductase 2, chloroplastic (Arabidopsis thaliana (Mouse-ear cress)).